Here is a 289-residue protein sequence, read N- to C-terminus: Energy-coupling factor transporter ATP-binding protein EcfA2 (289 aa).

Positions 3-246 (IRFKQVDFTY…TQWLKEKQLG (244 aa)) constitute an ABC transporter domain. ATP is bound at residue 40-47 (GHTGSGKS).

It belongs to the ABC transporter superfamily. Energy-coupling factor EcfA family. As to quaternary structure, forms a stable energy-coupling factor (ECF) transporter complex composed of 2 membrane-embedded substrate-binding proteins (S component), 2 ATP-binding proteins (A component) and 2 transmembrane proteins (T component).

It is found in the cell membrane. Its function is as follows. ATP-binding (A) component of a common energy-coupling factor (ECF) ABC-transporter complex. Unlike classic ABC transporters this ECF transporter provides the energy necessary to transport a number of different substrates. The protein is Energy-coupling factor transporter ATP-binding protein EcfA2 of Enterococcus faecalis (strain ATCC 700802 / V583).